A 423-amino-acid chain; its full sequence is Methylenetetrahydrofolate--tRNA-(uracil-5-)-methyltransferase TrmFO 2 (423 aa).

8–13 (GAGLSG) is an FAD binding site.

It belongs to the MnmG family. TrmFO subfamily. FAD is required as a cofactor.

It localises to the cytoplasm. The enzyme catalyses uridine(54) in tRNA + (6R)-5,10-methylene-5,6,7,8-tetrahydrofolate + NADH + H(+) = 5-methyluridine(54) in tRNA + (6S)-5,6,7,8-tetrahydrofolate + NAD(+). It carries out the reaction uridine(54) in tRNA + (6R)-5,10-methylene-5,6,7,8-tetrahydrofolate + NADPH + H(+) = 5-methyluridine(54) in tRNA + (6S)-5,6,7,8-tetrahydrofolate + NADP(+). Its function is as follows. Catalyzes the folate-dependent formation of 5-methyl-uridine at position 54 (M-5-U54) in all tRNAs. The sequence is that of Methylenetetrahydrofolate--tRNA-(uracil-5-)-methyltransferase TrmFO 2 from Mycoplasma capricolum subsp. capricolum (strain California kid / ATCC 27343 / NCTC 10154).